The following is a 90-amino-acid chain: NELL2-interacting cell ontogeny regulator 1 (90 aa).

The N-terminal stretch at 1-26 (MVSSGYLQAVMLLLAVQLLCFRPSDA) is a signal peptide.

This sequence belongs to the NICOL family.

It localises to the secreted. Its function is as follows. mRNA-binding protein which interacts with a range of target mRNAs and may promote extracellular matrix production. In Salmo salar (Atlantic salmon), this protein is NELL2-interacting cell ontogeny regulator 1.